A 235-amino-acid polypeptide reads, in one-letter code: Urease accessory protein UreF (235 aa).

The protein belongs to the UreF family. As to quaternary structure, ureD, UreF and UreG form a complex that acts as a GTP-hydrolysis-dependent molecular chaperone, activating the urease apoprotein by helping to assemble the nickel containing metallocenter of UreC. The UreE protein probably delivers the nickel.

It is found in the cytoplasm. Its function is as follows. Required for maturation of urease via the functional incorporation of the urease nickel metallocenter. This chain is Urease accessory protein UreF, found in Psychrobacter cryohalolentis (strain ATCC BAA-1226 / DSM 17306 / VKM B-2378 / K5).